Reading from the N-terminus, the 213-residue chain is Uridine kinase (213 aa).

Position 12 to 19 (12 to 19) interacts with ATP; the sequence is GGSCSGKT.

It belongs to the uridine kinase family.

It is found in the cytoplasm. The enzyme catalyses uridine + ATP = UMP + ADP + H(+). The catalysed reaction is cytidine + ATP = CMP + ADP + H(+). It functions in the pathway pyrimidine metabolism; CTP biosynthesis via salvage pathway; CTP from cytidine: step 1/3. It participates in pyrimidine metabolism; UMP biosynthesis via salvage pathway; UMP from uridine: step 1/1. The protein is Uridine kinase (udk) of Mycoplasma genitalium (strain ATCC 33530 / DSM 19775 / NCTC 10195 / G37) (Mycoplasmoides genitalium).